Here is a 267-residue protein sequence, read N- to C-terminus: Cytochrome b (267 aa).

The next 4 membrane-spanning stretches (helical) occupy residues 33-53, 77-98, 113-133, and 178-198; these read FGSL…FLAM, WLIR…FIHV, WNIG…GYVL, and FFAF…VHLL. The heme b site is built by H83 and H97. Residues H182 and H196 each coordinate heme b. H201 provides a ligand contact to a ubiquinone. Residues 226–246 form a helical membrane-spanning segment; it reads IKDLLGVILLLMVLMILVLFF.

Belongs to the cytochrome b family. In terms of assembly, the cytochrome bc1 complex contains 11 subunits: 3 respiratory subunits (MT-CYB, CYC1 and UQCRFS1), 2 core proteins (UQCRC1 and UQCRC2) and 6 low-molecular weight proteins (UQCRH/QCR6, UQCRB/QCR7, UQCRQ/QCR8, UQCR10/QCR9, UQCR11/QCR10 and a cleavage product of UQCRFS1). This cytochrome bc1 complex then forms a dimer. Requires heme b as cofactor.

Its subcellular location is the mitochondrion inner membrane. In terms of biological role, component of the ubiquinol-cytochrome c reductase complex (complex III or cytochrome b-c1 complex) that is part of the mitochondrial respiratory chain. The b-c1 complex mediates electron transfer from ubiquinol to cytochrome c. Contributes to the generation of a proton gradient across the mitochondrial membrane that is then used for ATP synthesis. This is Cytochrome b (MT-CYB) from Abrothrix olivaceus (Olive grass mouse).